We begin with the raw amino-acid sequence, 456 residues long: Asparagine--tRNA ligase (456 aa).

This sequence belongs to the class-II aminoacyl-tRNA synthetase family. In terms of assembly, homodimer.

Its subcellular location is the cytoplasm. It catalyses the reaction tRNA(Asn) + L-asparagine + ATP = L-asparaginyl-tRNA(Asn) + AMP + diphosphate + H(+). The chain is Asparagine--tRNA ligase from Mycoplasmoides gallisepticum (strain R(low / passage 15 / clone 2)) (Mycoplasma gallisepticum).